Here is a 362-residue protein sequence, read N- to C-terminus: Chorismate synthase (362 aa).

2 residues coordinate NADP(+): R48 and R54. Residues 125-127, 238-239, G278, 293-297, and R319 each bind FMN; these read RSS, NA, and KPTSS.

It belongs to the chorismate synthase family. In terms of assembly, homotetramer. FMNH2 serves as cofactor.

It catalyses the reaction 5-O-(1-carboxyvinyl)-3-phosphoshikimate = chorismate + phosphate. It functions in the pathway metabolic intermediate biosynthesis; chorismate biosynthesis; chorismate from D-erythrose 4-phosphate and phosphoenolpyruvate: step 7/7. In terms of biological role, catalyzes the anti-1,4-elimination of the C-3 phosphate and the C-6 proR hydrogen from 5-enolpyruvylshikimate-3-phosphate (EPSP) to yield chorismate, which is the branch point compound that serves as the starting substrate for the three terminal pathways of aromatic amino acid biosynthesis. This reaction introduces a second double bond into the aromatic ring system. In Aeromonas salmonicida (strain A449), this protein is Chorismate synthase.